Reading from the N-terminus, the 863-residue chain is Importin subunit beta-1 (863 aa).

19 HEAT repeats span residues 2–31, 33–62, 85–124, 129–159, 170–201, 212–248, 253–299, 314–360, 364–392, 399–439, 449–481, 496–530, 536–586, 592–630, 635–671, 677–715, 720–767, 778–815, and 822–861; these read NAGE…AART, FAQY…LALK, VEIK…ELAT, DLMV…YICE, SNAI…LYDS, EYER…MHLY, PFYM…EIQE, FARA…QVVG, VNPV…AFGS, VAML…SSFV, LSPM…VCHF, YEAI…LITF, LPMI…IIRR, RTSS…MNSL, EVYV…LARA, LPYC…ALAI, QTYL…ITQA, QPYV…LAES, and KSYF…KRQA. One can recognise an Importin N-terminal domain in the interval 21–101; sequence AEKQLENAAR…KSLALQTLGS (81 aa).

Belongs to the importin beta family. Importin beta-1 subfamily. As to quaternary structure, forms a complex with an importin alpha subunit. Interacts with Ran; interacts specifically with the GTP-bound form of Ran (GTP-Ran), protecting it from GTP hydrolysis and nucleotide exchange. Interacts with nucleoporins.

It localises to the cytoplasm. The protein resides in the nucleus envelope. The protein localises to the nucleus. It is found in the nuclear pore complex. Functionally, importin beta subunit that functions in nuclear protein import through association with the importin alpha subunit, which binds to the clasical nuclear localization signal (cNLS) in cargo substrates. Docking of the importin/substrate complex to the nuclear pore complex (NPC) is mediated by importin beta through binding to nucleoporin FxFG repeats and the complex is subsequently translocated through the pore by an energy requiring, Ran-dependent mechanism. At the nucleoplasmic side of the NPC, GTP-Ran binds to importin beta and the three components separate, leading to release of the cargo. Importin alpha and beta are re-exported from the nucleus to the cytoplasm where GTP hydrolysis releases Ran from importin beta. The directionality of nuclear import is thought to be conferred by an asymmetric distribution of the GTP- and GDP-bound forms of Ran between the cytoplasm and nucleus. This chain is Importin subunit beta-1, found in Schizosaccharomyces pombe (strain 972 / ATCC 24843) (Fission yeast).